We begin with the raw amino-acid sequence, 94 residues long: Viral macrophage inflammatory protein 2 (94 aa).

The signal sequence occupies residues 1-20 (MDTKGILLVAVLTALLCLQS). Cystine bridges form between Cys34/Cys58 and Cys35/Cys74.

This sequence belongs to the intercrine beta (chemokine CC) family. Monomer. Interacts with human chemokine receptor CXCR4.

The protein localises to the secreted. In terms of biological role, blocks infection by several different human immunodeficiency virus type 1 (HIV-1) strains. This occurs because vMIP-II binds to a wide range of chemokine receptors. May form part of the response to host defenses contributing to virus-induced neoplasia and may have relevance to KSHV and HIV-I interactions. In Human herpesvirus 8 type P (isolate GK18) (HHV-8), this protein is Viral macrophage inflammatory protein 2 (ORF K4).